The chain runs to 105 residues: NADH-quinone oxidoreductase subunit K (105 aa).

Helical transmembrane passes span 8–28 (LAAY…GVFL), 34–54 (IILL…LVAF), and 65–85 (VFVF…LAIL).

The protein belongs to the complex I subunit 4L family. In terms of assembly, NDH-1 is composed of 14 different subunits. Subunits NuoA, H, J, K, L, M, N constitute the membrane sector of the complex.

The protein resides in the cell inner membrane. It carries out the reaction a quinone + NADH + 5 H(+)(in) = a quinol + NAD(+) + 4 H(+)(out). Functionally, NDH-1 shuttles electrons from NADH, via FMN and iron-sulfur (Fe-S) centers, to quinones in the respiratory chain. The immediate electron acceptor for the enzyme in this species is believed to be ubiquinone. Couples the redox reaction to proton translocation (for every two electrons transferred, four hydrogen ions are translocated across the cytoplasmic membrane), and thus conserves the redox energy in a proton gradient. The chain is NADH-quinone oxidoreductase subunit K from Acidithiobacillus ferrooxidans (strain ATCC 23270 / DSM 14882 / CIP 104768 / NCIMB 8455) (Ferrobacillus ferrooxidans (strain ATCC 23270)).